We begin with the raw amino-acid sequence, 343 residues long: Anthranilate phosphoribosyltransferase (343 aa).

5-phospho-alpha-D-ribose 1-diphosphate-binding positions include glycine 81, 84-85 (GD), 91-94 (NVST), 109-117 (KHGNRSVSS), and serine 121. Glycine 81 provides a ligand contact to anthranilate. Serine 93 lines the Mg(2+) pocket. Asparagine 112 lines the anthranilate pocket. Residue arginine 167 participates in anthranilate binding. Aspartate 226 and glutamate 227 together coordinate Mg(2+).

Belongs to the anthranilate phosphoribosyltransferase family. Homodimer. It depends on Mg(2+) as a cofactor.

The enzyme catalyses N-(5-phospho-beta-D-ribosyl)anthranilate + diphosphate = 5-phospho-alpha-D-ribose 1-diphosphate + anthranilate. It participates in amino-acid biosynthesis; L-tryptophan biosynthesis; L-tryptophan from chorismate: step 2/5. Catalyzes the transfer of the phosphoribosyl group of 5-phosphorylribose-1-pyrophosphate (PRPP) to anthranilate to yield N-(5'-phosphoribosyl)-anthranilate (PRA). This Chromohalobacter salexigens (strain ATCC BAA-138 / DSM 3043 / CIP 106854 / NCIMB 13768 / 1H11) protein is Anthranilate phosphoribosyltransferase.